Reading from the N-terminus, the 329-residue chain is MKNILQSTECLEDQQNVSMRPNLLDDFIGQSSVVNNLKIFINAAYTRKEPMDHVLLYGPPGLGKTTLAHIIAKELKVNFRSTAGPLLSKAGDLAAILTNLQAKDILFIDEIHRLNRNIEEILYSAMEDFCLDIIVGEGCGARTLRVDLPPFTLVGATTRIGLLSNPLRDRFGIPIHLEFYSTEELTKVIQRAAKVIKTNISNSGAQEISLRSRGTPRIALRLLRRIRDFMEVTEHNKIITDTFADKALLRLGIDKLGLDRQDIQYLKFIYDSNNPTGIDTISSGLSEDTGNIEETIEPYLIKINFIQRTPRGRVITEKAISHLREQEYI.

The tract at residues Met-1 to Tyr-180 is large ATPase domain (RuvB-L). Residues Arg-20, Gly-61, Lys-64, Thr-65, Thr-66, Glu-127–Phe-129, Arg-170, Tyr-180, and Arg-217 each bind ATP. Residue Thr-65 coordinates Mg(2+). The small ATPAse domain (RuvB-S) stretch occupies residues Ser-181–Gly-252. A head domain (RuvB-H) region spans residues Lys-255 to Ile-329. DNA-binding residues include Arg-308 and Arg-313.

This sequence belongs to the RuvB family. As to quaternary structure, homohexamer. Forms an RuvA(8)-RuvB(12)-Holliday junction (HJ) complex. HJ DNA is sandwiched between 2 RuvA tetramers; dsDNA enters through RuvA and exits via RuvB. An RuvB hexamer assembles on each DNA strand where it exits the tetramer. Each RuvB hexamer is contacted by two RuvA subunits (via domain III) on 2 adjacent RuvB subunits; this complex drives branch migration. In the full resolvosome a probable DNA-RuvA(4)-RuvB(12)-RuvC(2) complex forms which resolves the HJ.

The protein resides in the cytoplasm. The catalysed reaction is ATP + H2O = ADP + phosphate + H(+). Functionally, the RuvA-RuvB-RuvC complex processes Holliday junction (HJ) DNA during genetic recombination and DNA repair, while the RuvA-RuvB complex plays an important role in the rescue of blocked DNA replication forks via replication fork reversal (RFR). RuvA specifically binds to HJ cruciform DNA, conferring on it an open structure. The RuvB hexamer acts as an ATP-dependent pump, pulling dsDNA into and through the RuvAB complex. RuvB forms 2 homohexamers on either side of HJ DNA bound by 1 or 2 RuvA tetramers; 4 subunits per hexamer contact DNA at a time. Coordinated motions by a converter formed by DNA-disengaged RuvB subunits stimulates ATP hydrolysis and nucleotide exchange. Immobilization of the converter enables RuvB to convert the ATP-contained energy into a lever motion, pulling 2 nucleotides of DNA out of the RuvA tetramer per ATP hydrolyzed, thus driving DNA branch migration. The RuvB motors rotate together with the DNA substrate, which together with the progressing nucleotide cycle form the mechanistic basis for DNA recombination by continuous HJ branch migration. Branch migration allows RuvC to scan DNA until it finds its consensus sequence, where it cleaves and resolves cruciform DNA. This Ehrlichia chaffeensis (strain ATCC CRL-10679 / Arkansas) protein is Holliday junction branch migration complex subunit RuvB.